Here is a 144-residue protein sequence, read N- to C-terminus: Endoribonuclease YbeY (144 aa).

Zn(2+)-binding residues include H108, H112, and H118.

This sequence belongs to the endoribonuclease YbeY family. The cofactor is Zn(2+).

The protein resides in the cytoplasm. Its function is as follows. Single strand-specific metallo-endoribonuclease involved in late-stage 70S ribosome quality control and in maturation of the 3' terminus of the 16S rRNA. This is Endoribonuclease YbeY from Phytoplasma australiense.